The chain runs to 671 residues: TBC1 domain family member 15 (671 aa).

N-acetylalanine is present on alanine 2. 5 positions are modified to phosphoserine: serine 23, serine 32, serine 70, serine 205, and serine 257. The region spanning 329–539 (GLSHSLRKQA…RLWEVMWTEL (211 aa)) is the Rab-GAP TBC domain. Residues serine 623 and serine 655 each carry the phosphoserine modification. The segment at 650–671 (EAKDDSPTQTLASPNACRLTPA) is disordered. Phosphothreonine is present on threonine 669.

As to quaternary structure, interacts with non-phosphorylated form of RAB8A; phosphorylation of RAB8A at 'Thr-72' disrupts this interaction. Interacts with ARMC12. In terms of tissue distribution, ubiquitous, with highest expression in heart, liver and testis and lower expression in brain, spleen, lung, kidney and skeletal muscle.

The protein localises to the cytoplasm. Acts as a GTPase activating protein for RAB7A. Does not act on RAB4, RAB5 or RAB6. This Mus musculus (Mouse) protein is TBC1 domain family member 15 (Tbc1d15).